A 124-amino-acid chain; its full sequence is Protein archease (124 aa).

Residues histidine 7, aspartate 10, aspartate 123, and threonine 124 each coordinate Ca(2+).

It belongs to the archease family.

In terms of biological role, activates the tRNA-splicing ligase complex by facilitating the enzymatic turnover of catalytic subunit RtcB. Acts by promoting the guanylylation of RtcB, a key intermediate step in tRNA ligation. Can also alter the NTP specificity of RtcB such that ATP, dGTP or ITP is used efficiently. May also act as a chaperone or modulator of proteins involved in DNA or RNA processing. The chain is Protein archease from Thermotoga maritima (strain ATCC 43589 / DSM 3109 / JCM 10099 / NBRC 100826 / MSB8).